A 122-amino-acid polypeptide reads, in one-letter code: Large ribosomal subunit protein uL14 (122 aa).

This sequence belongs to the universal ribosomal protein uL14 family. In terms of assembly, part of the 50S ribosomal subunit. Forms a cluster with proteins L3 and L19. In the 70S ribosome, L14 and L19 interact and together make contacts with the 16S rRNA in bridges B5 and B8.

Binds to 23S rRNA. Forms part of two intersubunit bridges in the 70S ribosome. The protein is Large ribosomal subunit protein uL14 of Pseudoalteromonas translucida (strain TAC 125).